A 166-amino-acid polypeptide reads, in one-letter code: NADH-quinone oxidoreductase subunit I (166 aa).

2 4Fe-4S ferredoxin-type domains span residues 57-87 (LRRY…IESE) and 97-126 (TRYD…VTPI). Positions 67, 70, 73, 77, 106, 109, 112, and 116 each coordinate [4Fe-4S] cluster.

It belongs to the complex I 23 kDa subunit family. In terms of assembly, NDH-1 is composed of 14 different subunits. Subunits NuoA, H, J, K, L, M, N constitute the membrane sector of the complex. [4Fe-4S] cluster is required as a cofactor.

It is found in the cell inner membrane. The catalysed reaction is a quinone + NADH + 5 H(+)(in) = a quinol + NAD(+) + 4 H(+)(out). Functionally, NDH-1 shuttles electrons from NADH, via FMN and iron-sulfur (Fe-S) centers, to quinones in the respiratory chain. The immediate electron acceptor for the enzyme in this species is believed to be ubiquinone. Couples the redox reaction to proton translocation (for every two electrons transferred, four hydrogen ions are translocated across the cytoplasmic membrane), and thus conserves the redox energy in a proton gradient. This Legionella pneumophila (strain Lens) protein is NADH-quinone oxidoreductase subunit I.